The following is a 205-amino-acid chain: Holliday junction branch migration complex subunit RuvA (205 aa).

The segment at 1-65 is domain I; sequence MIAKLKGILD…EDRIHLFGFL (65 aa). The interval 66-144 is domain II; that stretch reads DNTEKVAFNM…NINTIANNTS (79 aa). The interval 145-153 is flexible linker; it reads LATLSTDSN. The interval 154 to 205 is domain III; sequence THDNILSDAITALIALGISRAEATQILSDIYALSPSISVNELVRTALQRRAK.

Belongs to the RuvA family. As to quaternary structure, homotetramer. Forms an RuvA(8)-RuvB(12)-Holliday junction (HJ) complex. HJ DNA is sandwiched between 2 RuvA tetramers; dsDNA enters through RuvA and exits via RuvB. An RuvB hexamer assembles on each DNA strand where it exits the tetramer. Each RuvB hexamer is contacted by two RuvA subunits (via domain III) on 2 adjacent RuvB subunits; this complex drives branch migration. In the full resolvosome a probable DNA-RuvA(4)-RuvB(12)-RuvC(2) complex forms which resolves the HJ.

The protein resides in the cytoplasm. Functionally, the RuvA-RuvB-RuvC complex processes Holliday junction (HJ) DNA during genetic recombination and DNA repair, while the RuvA-RuvB complex plays an important role in the rescue of blocked DNA replication forks via replication fork reversal (RFR). RuvA specifically binds to HJ cruciform DNA, conferring on it an open structure. The RuvB hexamer acts as an ATP-dependent pump, pulling dsDNA into and through the RuvAB complex. HJ branch migration allows RuvC to scan DNA until it finds its consensus sequence, where it cleaves and resolves the cruciform DNA. This chain is Holliday junction branch migration complex subunit RuvA, found in Orientia tsutsugamushi (strain Ikeda) (Rickettsia tsutsugamushi).